The chain runs to 176 residues: uncharacterized protein (176 aa).

This is an uncharacterized protein from Bacillus anthracis.